The chain runs to 492 residues: Transmembrane protein 39B (492 aa).

A disordered region spans residues 1–53 (MGGRRGPNRTSYYRNPLCEPGSSGASGGGHSSSASVSSVRSRSRTTSGTGLSS). Asn8 is a glycosylation site (N-linked (GlcNAc...) asparagine). A compositionally biased stretch (low complexity) spans 31–53 (SSSASVSSVRSRSRTTSGTGLSS). The next 8 membrane-spanning stretches (helical) occupy residues 77-97 (SILF…VHYI), 115-135 (TSLN…IVLG), 153-175 (SLFR…GWSL), 185-205 (TYSF…IPFL), 288-308 (EVLV…VWFV), 322-342 (LFLL…LPAS), 421-441 (ILNI…YSLM), and 447-467 (HQTI…FKLL).

It belongs to the TMEM39 family.

The protein resides in the endoplasmic reticulum membrane. May protect the cells against DNA damage caused by exposure to the cold-warming stress and facilitates tissue damage repair during the recovery phase. In Mus musculus (Mouse), this protein is Transmembrane protein 39B.